A 442-amino-acid polypeptide reads, in one-letter code: CBL-interacting serine/threonine-protein kinase 14 (442 aa).

The Protein kinase domain occupies 22–276 (YEVGKLVGCG…IEEIIHDPWF (255 aa)). Residues 28–36 (VGCGAFAKV) and Lys-51 each bind ATP. Asp-144 functions as the Proton acceptor in the catalytic mechanism. Residues 162-191 (DFGLSALTDQIRPDGLLHTLCGTPAYVAPE) form an activation loop region. The residue at position 166 (Ser-166) is a Phosphoserine. Thr-180 is modified (phosphothreonine). Positions 305-329 (MGARRMNAFDIISGSPGFNLSGLFG) constitute an NAF domain. The tract at residues 335 to 365 (DRVERFVSAWTAERVVERLEEIVSAENLTVA) is PPI.

It belongs to the protein kinase superfamily. CAMK Ser/Thr protein kinase family. SNF1 subfamily. As to quaternary structure, interacts with CBL2. Interacts with CBL3. Interacts with CBL8. Interacts with CBL9. Interacts with KIN10 and KIN11. Mn(2+) is required as a cofactor. Predominant in roots, cauline leaves, and flowers. Ubiquitous with highest expression in 7-day-old seedlings and flower buds, followed by that in cauline leaves and young siliques.

It localises to the cytoplasm. Its subcellular location is the nucleus. The catalysed reaction is L-seryl-[protein] + ATP = O-phospho-L-seryl-[protein] + ADP + H(+). The enzyme catalyses L-threonyl-[protein] + ATP = O-phospho-L-threonyl-[protein] + ADP + H(+). CIPK serine-threonine protein kinases interact with CBL proteins. Binding of a CBL protein to the regulatory NAF domain of CIPK protein lead to the activation of the kinase in a calcium-dependent manner. The polypeptide is CBL-interacting serine/threonine-protein kinase 14 (CIPK14) (Arabidopsis thaliana (Mouse-ear cress)).